We begin with the raw amino-acid sequence, 267 residues long: Putative transcription factor Ovo-like 1 (267 aa).

4 consecutive C2H2-type zinc fingers follow at residues 118–140 (FTCH…MKCH), 146–168 (HLCT…VRTH), 174–197 (YKCS…KKIH), and 213–235 (YVCE…LKEH).

The protein localises to the nucleus. In terms of biological role, putative transcription factor. Involved in hair formation and spermatogenesis. May function in the differentiation and/or maintenance of the urogenital system. The chain is Putative transcription factor Ovo-like 1 (OVOL1) from Bos taurus (Bovine).